Consider the following 269-residue polypeptide: Probable sulfate transport system permease protein cysT (269 aa).

Helical transmembrane passes span 10-30, 60-80, 92-112, 130-150, 179-199, 208-228, and 240-260; these read SWRI…LALL, MALI…WILV, AAID…LATV, VVFT…PFVV, FWKV…ALAF, SVVI…VLIF, and TVIG…INII. The 202-residue stretch at 54 to 255 folds into the ABC transmembrane type-1 domain; sequence YSITLSMALI…ILSISLFILV (202 aa).

This sequence belongs to the binding-protein-dependent transport system permease family. CysTW subfamily.

Its subcellular location is the plastid. It is found in the chloroplast membrane. Its function is as follows. Part of the ABC transporter complex cysAWTP (TC 3.A.1.6.1) involved in sulfate/thiosulfate import. Probably responsible for the translocation of the substrate across the membrane. The polypeptide is Probable sulfate transport system permease protein cysT (cysT) (Mesostigma viride (Green alga)).